The following is a 53-amino-acid chain: Lantibiotic paenibacillin (53 aa).

A propeptide spanning residues M1 to A24 is cleaved from the precursor. A24 carries the N-acetylalanine modification. At S25 the chain carries 2,3-didehydroalanine (Ser). 2 positions are modified to 2,3-didehydrobutyrine: T29 and T30. Positions S34–C38 form a cross-link, lanthionine (Ser-Cys). 3 cross-links (beta-methyllanthionine (Thr-Cys)) span residues T40–C43, T42–C45, and T46–C49. Residues S48–C52 constitute a cross-link (lanthionine (Ser-Cys)). At S50 the chain carries 2,3-didehydroalanine (Ser).

In terms of processing, maturation of lantibiotics involves the enzymatic conversion of Thr, and Ser into dehydrated AA and the formation of thioether bonds with cysteine. This is followed by membrane translocation and cleavage of the modified precursor. Post-translationally, the structure of the 2,3-didehydrobutyrines is not discussed in PubMed:17071789.

It is found in the secreted. Functionally, lanthionine-containing peptide antibiotic (lantibiotic) active on Gram-positive bacteria. The bactericidal activity of lantibiotics is based on depolarization of energized bacterial cytoplasmic membranes, initiated by the formation of aqueous transmembrane pores. Lacks antibacterial activity against Gram-negative bacteria. The polypeptide is Lantibiotic paenibacillin (Paenibacillus polymyxa (Bacillus polymyxa)).